Reading from the N-terminus, the 148-residue chain is Protein E6 (148 aa).

2 zinc fingers span residues 31–67 (CVYCERQLYRCEVYDFIFRDLCVVYRKGKPLGVCQPC) and 104–140 (CGKCQKPLCPLEKQRHVDENKRFHQIADQWTGRCTQC). The PDZ-binding domain motif lies at 146–148 (TVV).

This sequence belongs to the papillomaviridae E6 protein family. In terms of assembly, forms homodimers. Interacts with ubiquitin-protein ligase UBE3A/E6-AP and thus forms a complex with human TP53. Interacts with human NFX1 and MAGI3. Interacts with human IRF3; this interaction inhibits the establishment of antiviral state. Interacts with human TYK2; this interaction inhibits JAK-STAT activation by interferon alpha. Interacts with host DLG1; this interaction leads to the proteasomal degradation of DLG1.

The protein resides in the host cytoplasm. Its subcellular location is the host nucleus. Its function is as follows. Plays a major role in the induction and maintenance of cellular transformation. Acts mainly as an oncoprotein by stimulating the destruction of many host cell key regulatory proteins. E6 associates with host UBE3A/E6-AP ubiquitin-protein ligase, and inactivates tumor suppressors TP53 and TP73 by targeting them to the 26S proteasome for degradation. In turn, DNA damage and chromosomal instabilities increase and lead to cell proliferation and cancer development. The complex E6/E6AP targets several other substrates to degradation via the proteasome including host DLG1 or NFX1, a repressor of human telomerase reverse transcriptase (hTERT). The resulting increased expression of hTERT prevents the shortening of telomere length leading to cell immortalization. Other cellular targets including BAK1, Fas-associated death domain-containing protein (FADD) and procaspase 8, are degraded by E6/E6AP causing inhibition of apoptosis. E6 also inhibits immune response by interacting with host IRF3 and TYK2. These interactions prevent IRF3 transcriptional activities and inhibit TYK2-mediated JAK-STAT activation by interferon alpha resulting in inhibition of the interferon signaling pathway. The polypeptide is Protein E6 (Homo sapiens (Human)).